We begin with the raw amino-acid sequence, 71 residues long: Large ribosomal subunit protein bL31 (71 aa).

Zn(2+) is bound by residues Cys-16, Cys-18, Cys-36, and Cys-39.

Belongs to the bacterial ribosomal protein bL31 family. Type A subfamily. Part of the 50S ribosomal subunit. The cofactor is Zn(2+).

Binds the 23S rRNA. The protein is Large ribosomal subunit protein bL31 of Pseudothermotoga lettingae (strain ATCC BAA-301 / DSM 14385 / NBRC 107922 / TMO) (Thermotoga lettingae).